Here is a 95-residue protein sequence, read N- to C-terminus: Feather keratin B-4 (95 aa).

S1 is subject to N-acetylserine.

This sequence belongs to the avian keratin family. In terms of assembly, the avian keratins (F-ker, S-ker, C-ker and B-ker) are a complex mixture of very similar polypeptides.

The sequence is that of Feather keratin B-4 from Anas platyrhynchos (Mallard).